The following is a 397-amino-acid chain: Argininosuccinate synthase (397 aa).

Residue 8 to 16 (AYSGGLDTS) participates in ATP binding. Tyr86 and Ser91 together coordinate L-citrulline. Gly116 lines the ATP pocket. 3 residues coordinate L-aspartate: Thr118, Asn122, and Asp123. Asn122 contacts L-citrulline. L-citrulline-binding residues include Arg126, Ser175, Ser184, Glu260, and Tyr272.

It belongs to the argininosuccinate synthase family. Type 1 subfamily. Homotetramer.

It is found in the cytoplasm. The enzyme catalyses L-citrulline + L-aspartate + ATP = 2-(N(omega)-L-arginino)succinate + AMP + diphosphate + H(+). It participates in amino-acid biosynthesis; L-arginine biosynthesis; L-arginine from L-ornithine and carbamoyl phosphate: step 2/3. The protein is Argininosuccinate synthase of Clostridium botulinum (strain Okra / Type B1).